The following is a 214-amino-acid chain: tRNA (guanine-N(7)-)-methyltransferase (214 aa).

S-adenosyl-L-methionine is bound by residues E45, E70, D97, and D119. D119 is an active-site residue. Residues K123, D155, and 192 to 195 (TEYE) contribute to the substrate site.

It belongs to the class I-like SAM-binding methyltransferase superfamily. TrmB family.

The catalysed reaction is guanosine(46) in tRNA + S-adenosyl-L-methionine = N(7)-methylguanosine(46) in tRNA + S-adenosyl-L-homocysteine. Its pathway is tRNA modification; N(7)-methylguanine-tRNA biosynthesis. Its function is as follows. Catalyzes the formation of N(7)-methylguanine at position 46 (m7G46) in tRNA. In Clostridioides difficile (strain 630) (Peptoclostridium difficile), this protein is tRNA (guanine-N(7)-)-methyltransferase.